Here is a 468-residue protein sequence, read N- to C-terminus: Argininosuccinate lyase (468 aa).

It belongs to the lyase 1 family. Argininosuccinate lyase subfamily.

Its subcellular location is the cytoplasm. The catalysed reaction is 2-(N(omega)-L-arginino)succinate = fumarate + L-arginine. It functions in the pathway amino-acid biosynthesis; L-arginine biosynthesis; L-arginine from L-ornithine and carbamoyl phosphate: step 3/3. This is Argininosuccinate lyase from Methanothermobacter thermautotrophicus (strain ATCC 29096 / DSM 1053 / JCM 10044 / NBRC 100330 / Delta H) (Methanobacterium thermoautotrophicum).